A 265-amino-acid polypeptide reads, in one-letter code: Mlc titration factor A (265 aa).

4 residues coordinate Zn(2+): His-111, His-148, His-152, and Glu-211.

Belongs to the MtfA family. As to quaternary structure, interacts with Mlc. Zn(2+) serves as cofactor.

Its subcellular location is the cytoplasm. Involved in the modulation of the activity of the glucose-phosphotransferase system (glucose-PTS). Interacts with the transcriptional repressor Mlc, preventing its interaction with DNA and leading to the modulation of expression of genes regulated by Mlc, including ptsG, which encodes the PTS system glucose-specific EIICB component. In terms of biological role, shows zinc-dependent metallopeptidase activity. The protein is Mlc titration factor A of Klebsiella pneumoniae (strain 342).